A 129-amino-acid chain; its full sequence is Azurin iso-2 (129 aa).

The region spanning 1-129 (ASCETTVTSG…MMRGTLKLEE (129 aa)) is the Plastocyanin-like domain. A disulfide bond links Cys3 and Cys26. Cu cation contacts are provided by His46, Cys112, His117, and Met121.

It is found in the periplasm. This methylothroph organism uses azurin in the oxidation of methylamine. Iso-2 is probably the acceptor of electrons from methylamine dehydrogenase. This is Azurin iso-2 from Methylomonas sp. (strain J).